A 104-amino-acid chain; its full sequence is Guanyl-specific ribonuclease Ap1 (104 aa).

2 cysteine pairs are disulfide-bonded: cysteine 2/cysteine 10 and cysteine 6/cysteine 103. The active site involves histidine 40. The active-site Proton acceptor is the glutamate 58. Catalysis depends on histidine 92, which acts as the Proton donor.

This sequence belongs to the ribonuclease N1/T1 family.

The protein resides in the secreted. It carries out the reaction [RNA] containing guanosine + H2O = an [RNA fragment]-3'-guanosine-3'-phosphate + a 5'-hydroxy-ribonucleotide-3'-[RNA fragment].. The sequence is that of Guanyl-specific ribonuclease Ap1 from Aspergillus pallidus.